Consider the following 272-residue polypeptide: Phosphoglycolate phosphatase (272 aa).

Aspartate 19 serves as the catalytic Nucleophile. Mg(2+) is bound by residues aspartate 19, aspartate 21, and aspartate 182.

The protein belongs to the HAD-like hydrolase superfamily. CbbY/CbbZ/Gph/YieH family. It depends on Mg(2+) as a cofactor.

The catalysed reaction is 2-phosphoglycolate + H2O = glycolate + phosphate. It functions in the pathway organic acid metabolism; glycolate biosynthesis; glycolate from 2-phosphoglycolate: step 1/1. In terms of biological role, specifically catalyzes the dephosphorylation of 2-phosphoglycolate. Is involved in the dissimilation of the intracellular 2-phosphoglycolate formed during the DNA repair of 3'-phosphoglycolate ends, a major class of DNA lesions induced by oxidative stress. The sequence is that of Phosphoglycolate phosphatase from Pseudomonas fluorescens (strain ATCC BAA-477 / NRRL B-23932 / Pf-5).